Here is a 308-residue protein sequence, read N- to C-terminus: Eukaryotic translation initiation factor 3 subunit G-B (308 aa).

Disordered regions lie at residues 1 to 35 (MPTGDYDSKPSWADQVEEEGIDVEPLSPQIKKQDP) and 176 to 227 (STAD…DDNA). Residues 185–194 (GAEPEPAQAP) show a composition bias toward low complexity. The segment covering 209 to 227 (GGSRRGESMQPNRRADDNA) has biased composition (basic and acidic residues). The RRM domain occupies 227–305 (ATIRVTNLSE…LILNVEWAKP (79 aa)).

It belongs to the eIF-3 subunit G family. Component of the eukaryotic translation initiation factor 3 (eIF-3) complex, which is composed of 13 subunits: eif3a, eif3b, eif3c, eif3d, eif3e, eif3f, eif3g, eif3h, eif3i, eif3j, eif3k, eif3l and eif3m.

It localises to the cytoplasm. Its function is as follows. RNA-binding component of the eukaryotic translation initiation factor 3 (eIF-3) complex, which is involved in protein synthesis of a specialized repertoire of mRNAs and, together with other initiation factors, stimulates binding of mRNA and methionyl-tRNAi to the 40S ribosome. The eIF-3 complex specifically targets and initiates translation of a subset of mRNAs involved in cell proliferation. This subunit can bind 18S rRNA. In Xenopus laevis (African clawed frog), this protein is Eukaryotic translation initiation factor 3 subunit G-B (eif3g-b).